The chain runs to 471 residues: UDP-glycosyltransferase 1 (471 aa).

H15 serves as the catalytic Proton acceptor. Residue H15 participates in an anthocyanidin binding. Catalysis depends on D124, which acts as the Charge relay. UDP-alpha-D-glucose contacts are provided by T146, A348, Q350, H365, W368, N369, S370, and E373. Residue A388 coordinates an anthocyanidin. E389 and Q390 together coordinate UDP-alpha-D-glucose.

Belongs to the UDP-glycosyltransferase family. Expressed in roots. Detected in stems and leaves.

It carries out the reaction a 7-hydroxyisoflavone + UDP-alpha-D-glucose = a 7-hydroxyisoflavone 7-O-beta-D-glucoside + UDP + H(+). In terms of biological role, isoflavone 7-O-glucosyltransferase converting daidzein to daidzin, genistein to genistin and formononetin to ononin. Shows some activity toward the chalcone isoliquiritigenin, the flavanones liquiritigenin and naringenin, and the flavone apigenin, but not toward cyanidin, luteolin, kaempferol, quercetin, daidzin and puerarin. The sequence is that of UDP-glycosyltransferase 1 from Pueraria montana var. lobata (Kudzu vine).